Here is a 331-residue protein sequence, read N- to C-terminus: DNA-directed RNA polymerase subunit alpha (331 aa).

Residues 1–223 (MDQKRPQLKA…DELTVFGNVE (223 aa)) form an alpha N-terminal domain (alpha-NTD) region. Positions 260–331 (PYPADLDTPR…LAQFGLALRD (72 aa)) are alpha C-terminal domain (alpha-CTD).

This sequence belongs to the RNA polymerase alpha chain family. Homodimer. The RNAP catalytic core consists of 2 alpha, 1 beta, 1 beta' and 1 omega subunit. When a sigma factor is associated with the core the holoenzyme is formed, which can initiate transcription.

The catalysed reaction is RNA(n) + a ribonucleoside 5'-triphosphate = RNA(n+1) + diphosphate. Its function is as follows. DNA-dependent RNA polymerase catalyzes the transcription of DNA into RNA using the four ribonucleoside triphosphates as substrates. This chain is DNA-directed RNA polymerase subunit alpha, found in Deinococcus geothermalis (strain DSM 11300 / CIP 105573 / AG-3a).